Reading from the N-terminus, the 324-residue chain is Methionyl-tRNA formyltransferase (324 aa).

114–117 (SLLP) lines the (6S)-5,6,7,8-tetrahydrofolate pocket.

The protein belongs to the Fmt family.

The catalysed reaction is L-methionyl-tRNA(fMet) + (6R)-10-formyltetrahydrofolate = N-formyl-L-methionyl-tRNA(fMet) + (6S)-5,6,7,8-tetrahydrofolate + H(+). Functionally, attaches a formyl group to the free amino group of methionyl-tRNA(fMet). The formyl group appears to play a dual role in the initiator identity of N-formylmethionyl-tRNA by promoting its recognition by IF2 and preventing the misappropriation of this tRNA by the elongation apparatus. This chain is Methionyl-tRNA formyltransferase, found in Parabacteroides distasonis (strain ATCC 8503 / DSM 20701 / CIP 104284 / JCM 5825 / NCTC 11152).